A 367-amino-acid polypeptide reads, in one-letter code: Voltage-gated potassium channel subunit beta-2 (367 aa).

Positions 56, 57, 63, and 85 each coordinate NADP(+). Catalysis depends on Tyr-90, which acts as the Proton donor/acceptor. Residues Asn-158, Ser-188, Arg-189, Gln-214, Trp-243, Ser-244, Pro-245, Leu-246, Ala-247, Cys-248, Lys-254, Tyr-262, Arg-264, Gly-323, Ser-325, Gln-329, Glu-332, and Asn-333 each coordinate NADP(+).

The protein belongs to the shaker potassium channel beta subunit family. As to quaternary structure, forms heteromultimeric complex with alpha subunits.

It localises to the cytoplasm. Its subcellular location is the membrane. It is found in the cell membrane. The protein localises to the cell projection. The protein resides in the axon. It localises to the synapse. Its subcellular location is the synaptosome. It is found in the cytoskeleton. Functionally, regulatory subunit of the voltage-gated potassium (Kv) Shaker channels composed of pore-forming and potassium-conducting alpha subunits and of regulatory beta subunits. The beta-2/KCNAB2 cytoplasmic subunit may promote potassium channel closure via a mechanism that does not involve physical obstruction of the channel pore. Enhances current amplitude of Kv1.1/KCNA1 and Kv2.2/KCNA2 channels. May display nicotinamide adenine dinucleotide phosphate (NADPH)-dependent aldoketoreductase activity by catalyzing the NADPH-dependent reduction of a wide range of aldehyde and ketone substrates. The binding of oxidized and reduced nucleotide may alter Kv channel gating and contribute to dynamic fine tuning of cell excitability. The polypeptide is Voltage-gated potassium channel subunit beta-2 (kcnab2) (Xenopus laevis (African clawed frog)).